Here is a 376-residue protein sequence, read N- to C-terminus: Erythronate-4-phosphate dehydrogenase (376 aa).

Residues Ser-45 and Thr-67 each coordinate substrate. Asp-147 lines the NAD(+) pocket. The active site involves Arg-209. Asp-233 contacts NAD(+). Residue Glu-238 is part of the active site. The active-site Proton donor is the His-255. Residue Gly-258 coordinates NAD(+). Tyr-259 is a substrate binding site.

This sequence belongs to the D-isomer specific 2-hydroxyacid dehydrogenase family. PdxB subfamily. Homodimer.

It is found in the cytoplasm. The catalysed reaction is 4-phospho-D-erythronate + NAD(+) = (R)-3-hydroxy-2-oxo-4-phosphooxybutanoate + NADH + H(+). Its pathway is cofactor biosynthesis; pyridoxine 5'-phosphate biosynthesis; pyridoxine 5'-phosphate from D-erythrose 4-phosphate: step 2/5. Its function is as follows. Catalyzes the oxidation of erythronate-4-phosphate to 3-hydroxy-2-oxo-4-phosphonooxybutanoate. This Shewanella halifaxensis (strain HAW-EB4) protein is Erythronate-4-phosphate dehydrogenase.